Consider the following 232-residue polypeptide: Aspartate/glutamate leucyltransferase (232 aa).

Belongs to the R-transferase family. Bpt subfamily.

It is found in the cytoplasm. The catalysed reaction is N-terminal L-glutamyl-[protein] + L-leucyl-tRNA(Leu) = N-terminal L-leucyl-L-glutamyl-[protein] + tRNA(Leu) + H(+). It catalyses the reaction N-terminal L-aspartyl-[protein] + L-leucyl-tRNA(Leu) = N-terminal L-leucyl-L-aspartyl-[protein] + tRNA(Leu) + H(+). Functions in the N-end rule pathway of protein degradation where it conjugates Leu from its aminoacyl-tRNA to the N-termini of proteins containing an N-terminal aspartate or glutamate. The polypeptide is Aspartate/glutamate leucyltransferase (Vibrio vulnificus (strain YJ016)).